Consider the following 149-residue polypeptide: 3-hydroxyacyl-[acyl-carrier-protein] dehydratase FabZ (149 aa).

His49 is a catalytic residue.

Belongs to the thioester dehydratase family. FabZ subfamily.

It localises to the cytoplasm. The enzyme catalyses a (3R)-hydroxyacyl-[ACP] = a (2E)-enoyl-[ACP] + H2O. Its function is as follows. Involved in unsaturated fatty acids biosynthesis. Catalyzes the dehydration of short chain beta-hydroxyacyl-ACPs and long chain saturated and unsaturated beta-hydroxyacyl-ACPs. The sequence is that of 3-hydroxyacyl-[acyl-carrier-protein] dehydratase FabZ from Sulfurimonas denitrificans (strain ATCC 33889 / DSM 1251) (Thiomicrospira denitrificans (strain ATCC 33889 / DSM 1251)).